Consider the following 226-residue polypeptide: E3 ubiquitin-protein ligase RNF186 (226 aa).

The segment at Cys39–Arg85 adopts an RING-type zinc-finger fold. Residues Gly121–Ala143 are disordered. 2 helical membrane passes run His157 to Ile177 and Trp179 to Pro199.

As to quaternary structure, interacts with BNIP1. In terms of processing, polyubiquitinated. 'Lys-29' autoubiquitination leads to proteasomal degradation.

It localises to the endoplasmic reticulum membrane. It carries out the reaction S-ubiquitinyl-[E2 ubiquitin-conjugating enzyme]-L-cysteine + [acceptor protein]-L-lysine = [E2 ubiquitin-conjugating enzyme]-L-cysteine + N(6)-ubiquitinyl-[acceptor protein]-L-lysine.. The protein operates within protein modification; protein ubiquitination. Functionally, E3 ubiquitin protein ligase that is part of an apoptotic signaling pathway activated by endoplasmic reticulum stress. Stimulates the expression of proteins specific of the unfolded protein response (UPR), ubiquitinates BNIP1 and regulates its localization to the mitochondrion and induces calcium release from the endoplasmic reticulum that ultimately leads to cell apoptosis. Plays a role in the maintenance of intestinal homeostasis and clearance of enteric pathogens. Upon NOD2 stimulation, ubiquitinates the ER stress sensor activating transcription factor 6/ATF6 and promotes the unfolded protein response UPR. Participates in basal level of autophagy maintenance by regulating the ubiquitination of EPHB2. Upon stimulation by ligand EFNB1, ubiquitinates EPHB2 and further recruits MAP1LC3B for autophagy induction. Controls nutrient sensing by ubiquitinating Sestrin-2/SESN2, which is an intracellular sensor of cytosolic leucine and inhibitor of mTORC1 activity. The polypeptide is E3 ubiquitin-protein ligase RNF186 (Bos taurus (Bovine)).